Here is a 377-residue protein sequence, read N- to C-terminus: Chaperone protein DnaJ (377 aa).

The region spanning 8–73 is the J domain; that stretch reads CYYETLEVER…DKRAAYDRFG (66 aa). Residues 135–213 form a CR-type zinc finger; sequence GKTAQIEIPV…CSGQGRVTRE (79 aa). Positions 148, 151, 165, 168, 187, 190, 201, and 204 each coordinate Zn(2+). CXXCXGXG motif repeat units lie at residues 148 to 155, 165 to 172, 187 to 194, and 201 to 208; these read CEACSGIG, CSTCGGAG, CPGCQGRG, and CPSCSGQG.

This sequence belongs to the DnaJ family. Homodimer. It depends on Zn(2+) as a cofactor.

It localises to the cytoplasm. In terms of biological role, participates actively in the response to hyperosmotic and heat shock by preventing the aggregation of stress-denatured proteins and by disaggregating proteins, also in an autonomous, DnaK-independent fashion. Unfolded proteins bind initially to DnaJ; upon interaction with the DnaJ-bound protein, DnaK hydrolyzes its bound ATP, resulting in the formation of a stable complex. GrpE releases ADP from DnaK; ATP binding to DnaK triggers the release of the substrate protein, thus completing the reaction cycle. Several rounds of ATP-dependent interactions between DnaJ, DnaK and GrpE are required for fully efficient folding. Also involved, together with DnaK and GrpE, in the DNA replication of plasmids through activation of initiation proteins. The polypeptide is Chaperone protein DnaJ (Bradyrhizobium diazoefficiens (strain JCM 10833 / BCRC 13528 / IAM 13628 / NBRC 14792 / USDA 110)).